The following is a 261-amino-acid chain: 4-hydroxy-tetrahydrodipicolinate reductase (261 aa).

Residues 11 to 16 (GFTGAM), 96 to 98 (GTT), and 122 to 125 (APNF) contribute to the NAD(+) site. Catalysis depends on H152, which acts as the Proton donor/acceptor. (S)-2,3,4,5-tetrahydrodipicolinate is bound at residue H153. The Proton donor role is filled by K156. Residue 162–163 (GT) participates in (S)-2,3,4,5-tetrahydrodipicolinate binding.

This sequence belongs to the DapB family.

The protein localises to the cytoplasm. The enzyme catalyses (S)-2,3,4,5-tetrahydrodipicolinate + NAD(+) + H2O = (2S,4S)-4-hydroxy-2,3,4,5-tetrahydrodipicolinate + NADH + H(+). The catalysed reaction is (S)-2,3,4,5-tetrahydrodipicolinate + NADP(+) + H2O = (2S,4S)-4-hydroxy-2,3,4,5-tetrahydrodipicolinate + NADPH + H(+). The protein operates within amino-acid biosynthesis; L-lysine biosynthesis via DAP pathway; (S)-tetrahydrodipicolinate from L-aspartate: step 4/4. In terms of biological role, catalyzes the conversion of 4-hydroxy-tetrahydrodipicolinate (HTPA) to tetrahydrodipicolinate. In Lactobacillus acidophilus (strain ATCC 700396 / NCK56 / N2 / NCFM), this protein is 4-hydroxy-tetrahydrodipicolinate reductase.